The sequence spans 152 residues: SsrA-binding protein (152 aa).

It belongs to the SmpB family.

Its subcellular location is the cytoplasm. In terms of biological role, required for rescue of stalled ribosomes mediated by trans-translation. Binds to transfer-messenger RNA (tmRNA), required for stable association of tmRNA with ribosomes. tmRNA and SmpB together mimic tRNA shape, replacing the anticodon stem-loop with SmpB. tmRNA is encoded by the ssrA gene; the 2 termini fold to resemble tRNA(Ala) and it encodes a 'tag peptide', a short internal open reading frame. During trans-translation Ala-aminoacylated tmRNA acts like a tRNA, entering the A-site of stalled ribosomes, displacing the stalled mRNA. The ribosome then switches to translate the ORF on the tmRNA; the nascent peptide is terminated with the 'tag peptide' encoded by the tmRNA and targeted for degradation. The ribosome is freed to recommence translation, which seems to be the essential function of trans-translation. This Rickettsia felis (strain ATCC VR-1525 / URRWXCal2) (Rickettsia azadi) protein is SsrA-binding protein.